Here is a 227-residue protein sequence, read N- to C-terminus: Cytochrome c oxidase subunit 2 (227 aa).

Topologically, residues 1-14 are mitochondrial intermembrane; sequence MAYPLQLGLQDATS. Residues 15 to 45 form a helical membrane-spanning segment; it reads PIMEELTSFHDHTLMIVFLISSLVLYIISSM. Topologically, residues 46-59 are mitochondrial matrix; the sequence is LTTKMTHTNTMDAQ. A helical transmembrane segment spans residues 60–87; it reads GVETIWTILPAAILVLIALPSLRILYMM. Topologically, residues 88 to 227 are mitochondrial intermembrane; that stretch reads DEINNPALTV…HFENWSASMI (140 aa). Residues histidine 161, cysteine 196, glutamate 198, cysteine 200, histidine 204, and methionine 207 each coordinate Cu cation. Glutamate 198 is a binding site for Mg(2+).

The protein belongs to the cytochrome c oxidase subunit 2 family. Component of the cytochrome c oxidase (complex IV, CIV), a multisubunit enzyme composed of 14 subunits. The complex is composed of a catalytic core of 3 subunits MT-CO1, MT-CO2 and MT-CO3, encoded in the mitochondrial DNA, and 11 supernumerary subunits COX4I, COX5A, COX5B, COX6A, COX6B, COX6C, COX7A, COX7B, COX7C, COX8 and NDUFA4, which are encoded in the nuclear genome. The complex exists as a monomer or a dimer and forms supercomplexes (SCs) in the inner mitochondrial membrane with NADH-ubiquinone oxidoreductase (complex I, CI) and ubiquinol-cytochrome c oxidoreductase (cytochrome b-c1 complex, complex III, CIII), resulting in different assemblies (supercomplex SCI(1)III(2)IV(1) and megacomplex MCI(2)III(2)IV(2)). Found in a complex with TMEM177, COA6, COX18, COX20, SCO1 and SCO2. Interacts with TMEM177 in a COX20-dependent manner. Interacts with COX20. Interacts with COX16. It depends on Cu cation as a cofactor.

The protein resides in the mitochondrion inner membrane. It catalyses the reaction 4 Fe(II)-[cytochrome c] + O2 + 8 H(+)(in) = 4 Fe(III)-[cytochrome c] + 2 H2O + 4 H(+)(out). In terms of biological role, component of the cytochrome c oxidase, the last enzyme in the mitochondrial electron transport chain which drives oxidative phosphorylation. The respiratory chain contains 3 multisubunit complexes succinate dehydrogenase (complex II, CII), ubiquinol-cytochrome c oxidoreductase (cytochrome b-c1 complex, complex III, CIII) and cytochrome c oxidase (complex IV, CIV), that cooperate to transfer electrons derived from NADH and succinate to molecular oxygen, creating an electrochemical gradient over the inner membrane that drives transmembrane transport and the ATP synthase. Cytochrome c oxidase is the component of the respiratory chain that catalyzes the reduction of oxygen to water. Electrons originating from reduced cytochrome c in the intermembrane space (IMS) are transferred via the dinuclear copper A center (CU(A)) of subunit 2 and heme A of subunit 1 to the active site in subunit 1, a binuclear center (BNC) formed by heme A3 and copper B (CU(B)). The BNC reduces molecular oxygen to 2 water molecules using 4 electrons from cytochrome c in the IMS and 4 protons from the mitochondrial matrix. This Acomys ignitus (Fiery spiny mouse) protein is Cytochrome c oxidase subunit 2 (MT-CO2).